We begin with the raw amino-acid sequence, 346 residues long: Large ribosomal subunit protein uL3 (346 aa).

The interval 324-346 is disordered; sequence KPPKKKPPVERPQITYVSRESKQ.

Belongs to the universal ribosomal protein uL3 family. Part of the 50S ribosomal subunit. Forms a cluster with proteins L14 and L24e.

In terms of biological role, one of the primary rRNA binding proteins, it binds directly near the 3'-end of the 23S rRNA, where it nucleates assembly of the 50S subunit. The chain is Large ribosomal subunit protein uL3 from Thermococcus gammatolerans (strain DSM 15229 / JCM 11827 / EJ3).